A 576-amino-acid polypeptide reads, in one-letter code: Plant intracellular Ras-group-related LRR protein 4 (576 aa).

The span at 130–151 (AAPAAATTTTSTAAAGSSSSSA) shows a compositional bias: low complexity. The tract at residues 130 to 181 (AAPAAATTTTSTAAAGSSSSSAVGNAERHASSGTNGFTASRVAGTSTSTGRV) is disordered. Positions 160–180 (SSGTNGFTASRVAGTSTSTGR) are enriched in polar residues. 11 LRR repeats span residues 272–295 (LTGL…IGKL), 296–318 (FSLA…IGDL), 320–341 (SLIY…IGRL), 342–364 (LNLE…IGSL), 366–387 (RLKK…IGHC), 389–410 (SLVE…VGKL), 411–433 (EPLE…MASL), 434–456 (TKLK…FCFA), 458–481 (SLIK…IGNL), 482–503 (EMLE…SFGN), and 505–527 (KHLR…IALK). The short motif at 528–535 (GAQAVVQY) is the GVYW; degenerate element.

This sequence belongs to the SHOC2 family. As to expression, widely expressed.

In terms of biological role, leucine-rich repeat protein that likely mediates protein interactions, possibly in the context of signal transduction. The protein is Plant intracellular Ras-group-related LRR protein 4 (IRL4) of Oryza sativa subsp. japonica (Rice).